The primary structure comprises 234 residues: Sugar fermentation stimulation protein A (234 aa).

Positions Leu201 to Ser220 form a DNA-binding region, H-T-H motif.

Belongs to the SfsA family.

Its function is as follows. Binds to DNA non-specifically. Could be a regulatory factor involved in maltose metabolism. In Escherichia coli (strain SMS-3-5 / SECEC), this protein is Sugar fermentation stimulation protein A.